Consider the following 1497-residue polypeptide: MIFSQGASPLKGEFSRIKFSIASPESILAHSRGEVLKPETINYRTFKPERDGLMCEKIFGPTKDWECYCGKYKRVRYKGIICDRCGVEVTTKSVRRERMGHIALAVPVVHTWFFRSVPSKIGALLDLSTKELERIIYYEVYVVINPGEPGEKQGIKKLDRLTEEQYFQIITEYEDNQDLEDSDPDKFVAKMGGEAIHMLLKNIDLDASAIHLRKVLKESNSEQKRADALKRLKVVEAFRKSYEPHKKTRKKPQGLFPEDELPEPYVYEGNKPEYMVMEVVPVIPPELRPLVPLEGGRFATSDLNDLYRRVIIRNNRLKKLIDIRAPEVILRNEKRMLQEAVDALFDNSRKANAVKTGESNRPLKSLSDALKGKQGRFRQNLLGKRVDYSGRSVIVVGPELKLHECGLPKSMAIELFQPFVIRRLVDRGIAKSVKSAKKLIDKKDPIVWDVLEKVIDGRPVLLNRAPTLHRLGIQAFQPLLIEGKAIQIHPLVCTAFNADFDGDQMAVHIPLSQEAQLEASLLMLSSHNLILPQSGKPVTVPSQDMVLGMYYLTKSRSRDLGEGQIFYSPQDVLIAYNEERVGLHAQIFVQYDGEIDQKFDSLRVLDTMTDLTAEKSAWLKAQIEKKCILLTTVGRVIFNQNVPKEIGFINRVIDKKVAKELIGRLSSEVGNVETAKFLDNIKEVGFHYAMKGGLSVGLSDAIVPETKARHIKSAQRDSTKVVKEYNRGTLTDNERYNQIVDVWQKTSNIVAEESYQKLKKDRDGFNPLYMMLDSGARGSREQVRQLTGMRGLIARPQKSMSGQPGEIIENPIISNLKEGLTVLEYFISTHGARKGLSDTSLKTADAGYLTRRLHDVAQDVIVTIDDCGTTRGLYVHRNIEEETSGQIKFREKIKGRVAARDIIDTLNNNVIVNSGEIITEELAELIQETAGVEEAEIRSVLTCESKIGICSKCYGTNLSVHELVEIGEAVGVIAAQSIGEPGTQLTLRTFHQGGTAQGGISETETKAFYDGQIQFEDIKTVEHTAINEDGVADLRIIVIQKNGKINIADPESGKILKRYLVPHGAHLHCKNGSLVKKDQVMFSSEPNSTQIIAEIPGIIKFADIEKGITYKEEVDPQTGFSQHTIINWRSKLRATETREPRLMIIDASGEVRKTYPVPIKSNLYVEDGQKVEPGDIMAKVPRNLDRVGGDITAGLPKVTELFEARIPTDPAIVTEIDGYVSFGSQRRSSKEIKVKNDFGEEKVYYVQVGKHVLANEGDEVKAGDPLTDGAVSPQDILRIQGPNAVQQYLVNEIQKVYQINAGVEINDKHLEVIVRQMLQKVRVEEPGDTDLLPGDLIDRSAFVESNQSVAEKVRITEKGDAPARIQDSQLHKVRDITKLNRELRKNSKNMIAFEPALQATSHPVLLGITSAALQTESVISAASFQETTKVLTDAAVAGKVDYLAGLKENVIVGKLIPAGTGLKRYKAIKLTGEGQESNATERVVEEPATREGFANER.

Zn(2+) contacts are provided by Cys67, Cys69, Cys82, and Cys85. Mg(2+) is bound by residues Asp499, Asp501, and Asp503. Residues Cys867, Cys943, Cys950, and Cys953 each contribute to the Zn(2+) site. Residues 1476 to 1497 form a disordered region; the sequence is ESNATERVVEEPATREGFANER. The segment covering 1482-1497 has biased composition (basic and acidic residues); it reads RVVEEPATREGFANER.

It belongs to the RNA polymerase beta' chain family. In terms of assembly, the RNAP catalytic core consists of 2 alpha, 1 beta, 1 beta' and 1 omega subunit. When a sigma factor is associated with the core the holoenzyme is formed, which can initiate transcription. Mg(2+) is required as a cofactor. The cofactor is Zn(2+).

The catalysed reaction is RNA(n) + a ribonucleoside 5'-triphosphate = RNA(n+1) + diphosphate. DNA-dependent RNA polymerase catalyzes the transcription of DNA into RNA using the four ribonucleoside triphosphates as substrates. This Pelodictyon phaeoclathratiforme (strain DSM 5477 / BU-1) protein is DNA-directed RNA polymerase subunit beta'.